Here is a 287-residue protein sequence, read N- to C-terminus: ATP synthase gamma chain (287 aa).

The protein belongs to the ATPase gamma chain family. F-type ATPases have 2 components, CF(1) - the catalytic core - and CF(0) - the membrane proton channel. CF(1) has five subunits: alpha(3), beta(3), gamma(1), delta(1), epsilon(1). CF(0) has three main subunits: a, b and c.

The protein localises to the cell inner membrane. In terms of biological role, produces ATP from ADP in the presence of a proton gradient across the membrane. The gamma chain is believed to be important in regulating ATPase activity and the flow of protons through the CF(0) complex. The protein is ATP synthase gamma chain of Shigella sonnei (strain Ss046).